A 142-amino-acid chain; its full sequence is Hemoglobin subunit alpha-1 (142 aa).

The region spanning 2–142 is the Globin domain; that stretch reads VLSAADKSNV…VSTVLTSKYR (141 aa). Residue H59 coordinates O2. H88 serves as a coordination point for heme b.

It belongs to the globin family. As to quaternary structure, heterotetramer of two alpha chains and two beta chains.

Involved in oxygen transport from the lung to the various peripheral tissues. In terms of biological role, hemopressin acts as an antagonist peptide of the cannabinoid receptor CNR1. Hemopressin-binding efficiently blocks cannabinoid receptor CNR1 and subsequent signaling. This chain is Hemoglobin subunit alpha-1 (HBA1), found in Capra hircus (Goat).